A 1100-amino-acid polypeptide reads, in one-letter code: DNA-directed RNA polymerase subunit beta (1100 aa).

The disordered stretch occupies residues 1064-1100; that stretch reads YEEDKEVDLMADVNQRRTPSRPTYESMSVGDIDDDDD. Positions 1079 to 1089 are enriched in polar residues; that stretch reads RRTPSRPTYES.

The protein belongs to the RNA polymerase beta chain family. In terms of assembly, in cyanobacteria the RNAP catalytic core is composed of 2 alpha, 1 beta, 1 beta', 1 gamma and 1 omega subunit. When a sigma factor is associated with the core the holoenzyme is formed, which can initiate transcription.

The enzyme catalyses RNA(n) + a ribonucleoside 5'-triphosphate = RNA(n+1) + diphosphate. In terms of biological role, DNA-dependent RNA polymerase catalyzes the transcription of DNA into RNA using the four ribonucleoside triphosphates as substrates. This is DNA-directed RNA polymerase subunit beta from Synechococcus sp. (strain ATCC 27144 / PCC 6301 / SAUG 1402/1) (Anacystis nidulans).